Consider the following 218-residue polypeptide: 3-dehydroquinate dehydratase (218 aa).

Residues 29-31 and Arg-56 each bind 3-dehydroquinate; that span reads EFR. The active-site Proton donor/acceptor is the His-116. Lys-142 serves as the catalytic Schiff-base intermediate with substrate. The 3-dehydroquinate site is built by Arg-180, Ser-200, and Gln-204.

The protein belongs to the type-I 3-dehydroquinase family. As to quaternary structure, homodimer.

The enzyme catalyses 3-dehydroquinate = 3-dehydroshikimate + H2O. It participates in metabolic intermediate biosynthesis; chorismate biosynthesis; chorismate from D-erythrose 4-phosphate and phosphoenolpyruvate: step 3/7. Functionally, involved in the third step of the chorismate pathway, which leads to the biosynthesis of aromatic amino acids. Catalyzes the cis-dehydration of 3-dehydroquinate (DHQ) and introduces the first double bond of the aromatic ring to yield 3-dehydroshikimate. The polypeptide is 3-dehydroquinate dehydratase (Methanococcus maripaludis (strain C7 / ATCC BAA-1331)).